A 194-amino-acid polypeptide reads, in one-letter code: Protein cholesin (194 aa).

The segment at 1 to 83 is disordered; it reads MAKQKRKVPE…RKKEERQRLR (83 aa). A phosphoserine mark is found at Ser23 and Ser59. Basic and acidic residues predominate over residues 61–83; the sequence is EEQRVLERKLKKERKKEERQRLR. 2 positions are modified to phosphoserine: Ser97 and Ser175.

As to expression, secreted from the instestine, secretion is induced by feeding and cholesterol absorption.

It is found in the secreted. Hormone secreted from the intestine in response to cholesterol, where it acts to inhibit cholesterol synthesis in the liver and VLDL secretion,leading to a reduction in circulating cholesterol levels. Acts through binding to its receptor, GPR146. This Homo sapiens (Human) protein is Protein cholesin.